We begin with the raw amino-acid sequence, 336 residues long: Dihydroorotate dehydrogenase (quinone) (336 aa).

Residues 62–66 (AGLDK) and threonine 86 contribute to the FMN site. Lysine 66 provides a ligand contact to substrate. 111–115 (NRMGF) lines the substrate pocket. Positions 139 and 172 each coordinate FMN. Residue asparagine 172 coordinates substrate. The active-site Nucleophile is the serine 175. Asparagine 177 provides a ligand contact to substrate. Positions 217 and 245 each coordinate FMN. 246 to 247 (NT) serves as a coordination point for substrate. Residues glycine 268, glycine 297, and 318 to 319 (YS) contribute to the FMN site.

The protein belongs to the dihydroorotate dehydrogenase family. Type 2 subfamily. In terms of assembly, monomer. FMN serves as cofactor.

The protein localises to the cell membrane. It carries out the reaction (S)-dihydroorotate + a quinone = orotate + a quinol. It functions in the pathway pyrimidine metabolism; UMP biosynthesis via de novo pathway; orotate from (S)-dihydroorotate (quinone route): step 1/1. In terms of biological role, catalyzes the conversion of dihydroorotate to orotate with quinone as electron acceptor. In Edwardsiella ictaluri (strain 93-146), this protein is Dihydroorotate dehydrogenase (quinone).